A 169-amino-acid polypeptide reads, in one-letter code: Probable metallophosphoesterase YsnB (169 aa).

The Mn(2+) site is built by Asp8, His10, Asp35, Asn54, His78, His107, and His109.

Belongs to the metallophosphoesterase superfamily. YfcE family. The cofactor is Mn(2+).

The sequence is that of Probable metallophosphoesterase YsnB (ysnB) from Bacillus subtilis (strain 168).